We begin with the raw amino-acid sequence, 471 residues long: Glutamate--tRNA ligase (471 aa).

The 'HIGH' region motif lies at 9–19; that stretch reads PSPTGYLHVGG. Residues Cys-98, Cys-100, Cys-125, and His-127 each coordinate Zn(2+). The short motif at 237 to 241 is the 'KMSKS' region element; sequence KLSKR. Lys-240 is a binding site for ATP.

Belongs to the class-I aminoacyl-tRNA synthetase family. Glutamate--tRNA ligase type 1 subfamily. As to quaternary structure, monomer. Zn(2+) serves as cofactor.

It localises to the cytoplasm. It carries out the reaction tRNA(Glu) + L-glutamate + ATP = L-glutamyl-tRNA(Glu) + AMP + diphosphate. Functionally, catalyzes the attachment of glutamate to tRNA(Glu) in a two-step reaction: glutamate is first activated by ATP to form Glu-AMP and then transferred to the acceptor end of tRNA(Glu). This Shigella boydii serotype 18 (strain CDC 3083-94 / BS512) protein is Glutamate--tRNA ligase.